Reading from the N-terminus, the 515-residue chain is Protein nucleotidyltransferase YdiU (515 aa).

ATP-binding residues include Gly101, Gly103, Arg104, Lys124, Asp136, Gly137, Arg194, and Arg201. Residue Asp269 is the Proton acceptor of the active site. Positions 270 and 279 each coordinate Mg(2+). Asp279 lines the ATP pocket.

This sequence belongs to the SELO family. It depends on Mg(2+) as a cofactor. The cofactor is Mn(2+).

It carries out the reaction L-seryl-[protein] + ATP = 3-O-(5'-adenylyl)-L-seryl-[protein] + diphosphate. It catalyses the reaction L-threonyl-[protein] + ATP = 3-O-(5'-adenylyl)-L-threonyl-[protein] + diphosphate. The catalysed reaction is L-tyrosyl-[protein] + ATP = O-(5'-adenylyl)-L-tyrosyl-[protein] + diphosphate. The enzyme catalyses L-histidyl-[protein] + UTP = N(tele)-(5'-uridylyl)-L-histidyl-[protein] + diphosphate. It carries out the reaction L-seryl-[protein] + UTP = O-(5'-uridylyl)-L-seryl-[protein] + diphosphate. It catalyses the reaction L-tyrosyl-[protein] + UTP = O-(5'-uridylyl)-L-tyrosyl-[protein] + diphosphate. Nucleotidyltransferase involved in the post-translational modification of proteins. It can catalyze the addition of adenosine monophosphate (AMP) or uridine monophosphate (UMP) to a protein, resulting in modifications known as AMPylation and UMPylation. The sequence is that of Protein nucleotidyltransferase YdiU from Cytophaga hutchinsonii (strain ATCC 33406 / DSM 1761 / CIP 103989 / NBRC 15051 / NCIMB 9469 / D465).